Here is a 299-residue protein sequence, read N- to C-terminus: Acetyl-hydrolase (299 aa).

Residues 73–75 carry the Involved in the stabilization of the negatively charged intermediate by the formation of the oxyanion hole motif; that stretch reads HGG. Active-site residues include Ser-143, Glu-237, and His-267.

It belongs to the 'GDXG' lipolytic enzyme family.

It participates in secondary metabolite biosynthesis; bialaphos biosynthesis. Functionally, this protein removes the N-acetyl group from bialaphos as one of the final steps of biosynthesis of phosphinothricin tripeptide (PTT), also known as bialaphos (BA), a natural-product antibiotic and potent herbicide. The sequence is that of Acetyl-hydrolase (bah) from Streptomyces hygroscopicus.